A 149-amino-acid chain; its full sequence is Acyl carrier protein 1, chloroplastic (149 aa).

Residues 1-59 constitute a chloroplast transit peptide; the sequence is MAHCLAAVSSFSPSAVRRRLSSQVANVVSSRSSVSFHSRQMSFVSISSRPSSLRFKICC. A Carrier domain is found at 69–144; it reads KETVDKVCMI…DAANLIEKLV (76 aa). Serine 104 carries the O-(pantetheine 4'-phosphoryl)serine modification.

Belongs to the acyl carrier protein (ACP) family. In terms of processing, 4'-phosphopantetheine is transferred from CoA to a specific serine of apo-ACP by acpS. This modification is essential for activity because fatty acids are bound in thioester linkage to the sulfhydryl of the prosthetic group.

The protein localises to the plastid. Its subcellular location is the chloroplast. It functions in the pathway lipid metabolism; fatty acid biosynthesis. Functionally, carrier of the growing fatty acid chain in fatty acid biosynthesis. The polypeptide is Acyl carrier protein 1, chloroplastic (ACL1.1) (Hordeum vulgare (Barley)).